Here is a 337-residue protein sequence, read N- to C-terminus: Putative tRNA (cytidine(32)/guanosine(34)-2'-O)-methyltransferase (337 aa).

Positions 53, 55, 76, 92, and 117 each coordinate S-adenosyl-L-methionine. The Proton acceptor role is filled by Lys-157. Composition is skewed to basic and acidic residues over residues 304–318 and 327–337; these read LKAE…KKTP and ELEKAAEKFQL. Residues 304–337 form a disordered region; it reads LKAELSRGKDQKKTPAENVPSVEELEKAAEKFQL.

This sequence belongs to the class I-like SAM-binding methyltransferase superfamily. RNA methyltransferase RlmE family. TRM7 subfamily.

Its subcellular location is the cytoplasm. It catalyses the reaction cytidine(32)/guanosine(34) in tRNA + 2 S-adenosyl-L-methionine = 2'-O-methylcytidine(32)/2'-O-methylguanosine(34) in tRNA + 2 S-adenosyl-L-homocysteine + 2 H(+). Methylates the 2'-O-ribose of nucleotides at positions 32 and 34 of the tRNA anticodon loop of substrate tRNAs. The sequence is that of Putative tRNA (cytidine(32)/guanosine(34)-2'-O)-methyltransferase from Caenorhabditis elegans.